A 316-amino-acid chain; its full sequence is Retinol dehydrogenase 12 (316 aa).

46-52 (GANTGIG) is an NADP(+) binding site. Position 175 (Ser-175) interacts with substrate. Tyr-200 acts as the Proton acceptor in catalysis.

The protein belongs to the short-chain dehydrogenases/reductases (SDR) family. In terms of tissue distribution, expressed in the inner segments of the photoreceptor in retina.

It carries out the reaction all-trans-retinol + NADP(+) = all-trans-retinal + NADPH + H(+). The enzyme catalyses 11-cis-retinol + NADP(+) = 11-cis-retinal + NADPH + H(+). It catalyses the reaction 9-cis-retinol + NADP(+) = 9-cis-retinal + NADPH + H(+). The catalysed reaction is a 4-hydroxynonen-1-ol + NADP(+) = a 4-hydroxynonenal + NADPH + H(+). It carries out the reaction (E)-non-2-en-1-ol + NADP(+) = (E)-non-2-enal + NADPH + H(+). The enzyme catalyses (Z)-non-6-en-1-ol + NADP(+) = (Z)-non-6-enal + NADPH + H(+). It catalyses the reaction nonan-1-ol + NADP(+) = nonanal + NADPH + H(+). The protein operates within cofactor metabolism; retinol metabolism. In terms of biological role, retinoids dehydrogenase/reductase with a clear preference for NADP. Displays high activity towards 9-cis, 11-cis and all-trans-retinal. Shows very weak activity toward 13-cis-retinol. Also exhibits activity, albeit with lower affinity than for retinaldehydes, towards lipid peroxidation products (C9 aldehydes) such as 4-hydroxynonenal and trans-2-nonenal. Plays an important function in photoreceptor cells to detoxify 4-hydroxynonenal and potentially other toxic aldehyde products resulting from lipid peroxidation. Has no dehydrogenase activity towards steroids. The chain is Retinol dehydrogenase 12 (Rdh12) from Mus musculus (Mouse).